Reading from the N-terminus, the 554-residue chain is MRSKRFEALAKRPVNQDGFVKEWIEEGFIAMESPNDPKPSIKIVNGTVTELDGKSASEFDLIDHFIARYGINLARAEEVMAMDSVKLANMLCDPNVKRKDIVPLTTAMTPAKIVEVVSHMNVVEMMMAMQKMRARRTPSQQAHVTNVKDNPVQIAADAAEGAWRGFDEQETTVAVARYAPFNAIALLVGSQVGRPGVLTQCSLEEATELKLGMLGHTCYAETISVYGTEPVFTDGDDTPWSKGFLASSYASRGLKMRFTSGSGSEVQMGYAEGKSMLYLEARCIYITKAAGVQGLQNGSVSCIGVPSAVPSGIRAVLAENLICSSLDLECASSNDQTFTHSDMRRTARLLMQFLPGTDFISSGYSAVPNYDNMFAGSNEDAEDFDDYNVLQRDLKVDGGLRPVREEDVIAIRNKAARALQAVFAGMGLPPITDEEVEAATYAHGSKDMPERNIVEDIKFAQEIINKNRNGLEVVKALAQGGFTDVAQDMLNIQKAKLTGDYLHTSAIIVGDGQVLSAVNDVNDYAGPATGYRLQGERWEEIKNIPGALDPNELG.

Belongs to the diol/glycerol dehydratase large subunit family. The propanediol dehydratase enzyme is a heterotrimeric complex composed of a large (PduC), a medium (PduD) and a small (PduE) subunit. Requires adenosylcob(III)alamin as cofactor.

The protein localises to the bacterial microcompartment. The enzyme catalyses propane-1,2-diol = propanal + H2O. Its pathway is polyol metabolism; 1,2-propanediol degradation. In terms of biological role, part of the PduCDE complex that catalyzes the dehydration of 1,2-propanediol (1,2-PD) to propionaldehyde. This subunit is directly targeted to the bacterial microcompartment (BMC). Functionally, expression of a cosmid containing the full 21-gene pdu operon in E.coli allows E.coli to grow on 1,2-propanediol (1,2-PD) with the appearance of BMCs in its cytoplasm. Its function is as follows. The 1,2-PD-specific bacterial microcompartment (BMC) concentrates low levels of 1,2-PD catabolic enzymes, concentrates volatile reaction intermediates thus enhancing pathway flux and keeps the level of toxic, mutagenic propionaldehyde low. In Citrobacter freundii, this protein is Propanediol dehydratase large subunit.